Here is a 106-residue protein sequence, read N- to C-terminus: UPF0145 protein Tlet_1264 (106 aa).

It belongs to the UPF0145 family.

This is UPF0145 protein Tlet_1264 from Pseudothermotoga lettingae (strain ATCC BAA-301 / DSM 14385 / NBRC 107922 / TMO) (Thermotoga lettingae).